A 382-amino-acid chain; its full sequence is ATP phosphoribosyltransferase regulatory subunit (382 aa).

It belongs to the class-II aminoacyl-tRNA synthetase family. HisZ subfamily. As to quaternary structure, heteromultimer composed of HisG and HisZ subunits.

Its subcellular location is the cytoplasm. It functions in the pathway amino-acid biosynthesis; L-histidine biosynthesis; L-histidine from 5-phospho-alpha-D-ribose 1-diphosphate: step 1/9. Functionally, required for the first step of histidine biosynthesis. May allow the feedback regulation of ATP phosphoribosyltransferase activity by histidine. This Burkholderia ambifaria (strain ATCC BAA-244 / DSM 16087 / CCUG 44356 / LMG 19182 / AMMD) (Burkholderia cepacia (strain AMMD)) protein is ATP phosphoribosyltransferase regulatory subunit.